Here is a 524-residue protein sequence, read N- to C-terminus: Cytochrome P450 4F1 (524 aa).

A helical membrane pass occupies residues 15-35 (VAFPWQTLLLFGASWILAQIL). The heme site is built by glutamate 328 and cysteine 468.

This sequence belongs to the cytochrome P450 family. Heme is required as a cofactor. As to expression, expressed in liver.

The protein localises to the endoplasmic reticulum membrane. Its subcellular location is the microsome membrane. It catalyses the reaction (5Z,8Z,11Z,14Z)-eicosatetraenoate + reduced [NADPH--hemoprotein reductase] + O2 = 20-hydroxy-(5Z,8Z,11Z,14Z)-eicosatetraenoate + oxidized [NADPH--hemoprotein reductase] + H2O + H(+). The enzyme catalyses 5-hydroxy-(6E,8Z,11Z,14Z)-eicosatetraenoate + reduced [NADPH--hemoprotein reductase] + O2 = 5,20-dihydroxy-(6E,8Z,11Z,14Z)-eicosatetraenoate + oxidized [NADPH--hemoprotein reductase] + H2O + H(+). It carries out the reaction 8-hydroxy-(5Z,9E,11Z,14Z)-eicosatetraenoate + reduced [NADPH--hemoprotein reductase] + O2 = 8,20-dihydroxy-(5Z,9E,11Z,14Z)-eicosatetraenoate + oxidized [NADPH--hemoprotein reductase] + H2O + H(+). The catalysed reaction is leukotriene B4 + reduced [NADPH--hemoprotein reductase] + O2 = 20-hydroxy-leukotriene B4 + oxidized [NADPH--hemoprotein reductase] + H2O + H(+). It catalyses the reaction 6-trans-leukotriene B4 + reduced [NADPH--hemoprotein reductase] + O2 = 20-hydroxy-6-trans-leukotriene B4 + oxidized [NADPH--hemoprotein reductase] + H2O + H(+). The enzyme catalyses lipoxin A4 + reduced [NADPH--hemoprotein reductase] + O2 = 20-hydroxy-lipoxin A4 + oxidized [NADPH--hemoprotein reductase] + H2O + H(+). A cytochrome P450 monooxygenase involved in the metabolism of arachidonic acid and its oxygenated derivatives. Mechanistically, uses molecular oxygen inserting one oxygen atom into a substrate, and reducing the second into a water molecule, with two electrons provided by NADPH via cytochrome P450 reductase (CPR; NADPH-ferrihemoprotein reductase). Participates in the conversion of arachidonic acid to omega-hydroxyeicosatetraenoic acid (20-HETE), a signaling molecule acting both as vasoconstrictive and natriuretic with overall effect on arterial blood pressure. May play a role in the oxidative inactivation of eicosanoids, including both pro-inflammatory and anti-inflammatory mediators such as leukotriene B4 (LTB4), lipoxin A4 (LXA4), and several HETEs. The chain is Cytochrome P450 4F1 from Rattus norvegicus (Rat).